Consider the following 120-residue polypeptide: Non-specific lipid-transfer protein 6 (120 aa).

The N-terminal stretch at 1 to 26 (MARSMSLKLACVVVLCLLVDAPLAQG) is a signal peptide. Intrachain disulfides connect Cys57/Cys102 and Cys77/Cys116.

Belongs to the plant LTP family. As to expression, specifically expressed in fiber cells.

Plant non-specific lipid-transfer proteins transfer phospholipids as well as galactolipids across membranes. May play a role in wax or cutin deposition in the cell walls of expanding epidermal cells and certain secretory tissues. In Gossypium hirsutum (Upland cotton), this protein is Non-specific lipid-transfer protein 6 (LTP6).